A 387-amino-acid polypeptide reads, in one-letter code: Adaptive-response sensory kinase SasA (387 aa).

An interacts with KaiC region spans residues 1 to 97; that stretch reads MGESLSPQAL…TDQLANQLPQ (97 aa). The region spanning 158–382 is the Histidine kinase domain; it reads LVAHDLRNPL…TFHFTMPVYR (225 aa). Phosphohistidine; by autocatalysis is present on His-161.

Homooligomerizes. Part of the circadian clock (KaiA, KaiB, KaiC, CikA, RpaA, SasA), the composition of which varies during the circadian cycle. Binds to the CI domain of KaiC; KaiB(fs) and SasA compete for the binding site. Binds preferentially to doubly phosphorylated KaiC. Interacts with LdpA. Autophosphorylates in vitro.

It catalyses the reaction ATP + protein L-histidine = ADP + protein N-phospho-L-histidine.. Its function is as follows. Member of the two-component regulatory system SasA/RpaA involved in genome-wide circadian gene expression. One of three clock output pathways. Participates in the KaiABC clock protein complex, which constitutes the main circadian regulator in cyanobacteria, via its interaction with KaiC. Required for robustness of the circadian rhythm of gene expression and involved in clock output. KaiC enhances the autophosphorylation activity of SasA, which then transfers its phosphate group to RpaA to activate it. Phosphotransfer is maximal when KaiC phosphorylation is active during the circadian cycle; this two-component system is activated by fully phosphorylated KaiC. A very robust clock is reconstituted with KaiA, KaiB, KaiC, SasA, CikA and RpaA; output is measured by transcription from an appropriate reporter. In addition to its output function, recruits fold-shifted KaiB (KaiB(fs)) to KaiC to cooperatively form the KaiB(6):KaiC(6) complex (independent of SasA kinase activity); at physiological concentrations increases their association. At higher concentrations SasA and KaiB(fs) compete to bind to KaiC. Mutations that decrease cooperativity nearly phenocopy a deletion mutation. Functionally, autophosphorylation and phosphotransfer activities are not essential for clock rhythms in continuous light, but they are essential for adaptation to light/dark cycles. The sequence is that of Adaptive-response sensory kinase SasA from Synechococcus elongatus (strain ATCC 33912 / PCC 7942 / FACHB-805) (Anacystis nidulans R2).